The sequence spans 247 residues: Cell division protein ZapD (247 aa).

Belongs to the ZapD family. As to quaternary structure, interacts with FtsZ.

It localises to the cytoplasm. Cell division factor that enhances FtsZ-ring assembly. Directly interacts with FtsZ and promotes bundling of FtsZ protofilaments, with a reduction in FtsZ GTPase activity. In Escherichia coli O17:K52:H18 (strain UMN026 / ExPEC), this protein is Cell division protein ZapD.